The chain runs to 249 residues: Hydroxyacylglutathione hydrolase (249 aa).

The Zn(2+) site is built by histidine 53, histidine 55, aspartate 57, histidine 58, histidine 110, aspartate 127, and histidine 165.

This sequence belongs to the metallo-beta-lactamase superfamily. Glyoxalase II family. Monomer. Zn(2+) is required as a cofactor.

The catalysed reaction is an S-(2-hydroxyacyl)glutathione + H2O = a 2-hydroxy carboxylate + glutathione + H(+). The protein operates within secondary metabolite metabolism; methylglyoxal degradation; (R)-lactate from methylglyoxal: step 2/2. Its function is as follows. Thiolesterase that catalyzes the hydrolysis of S-D-lactoyl-glutathione to form glutathione and D-lactic acid. The polypeptide is Hydroxyacylglutathione hydrolase (Buchnera aphidicola subsp. Baizongia pistaciae (strain Bp)).